A 120-amino-acid chain; its full sequence is uncharacterized protein (120 aa).

This is an uncharacterized protein from Saccharomyces cerevisiae (strain ATCC 204508 / S288c) (Baker's yeast).